The primary structure comprises 469 residues: 3-isopropylmalate dehydratase large subunit (469 aa).

Positions 350, 410, and 413 each coordinate [4Fe-4S] cluster.

It belongs to the aconitase/IPM isomerase family. LeuC type 1 subfamily. Heterodimer of LeuC and LeuD. It depends on [4Fe-4S] cluster as a cofactor.

It carries out the reaction (2R,3S)-3-isopropylmalate = (2S)-2-isopropylmalate. It functions in the pathway amino-acid biosynthesis; L-leucine biosynthesis; L-leucine from 3-methyl-2-oxobutanoate: step 2/4. Catalyzes the isomerization between 2-isopropylmalate and 3-isopropylmalate, via the formation of 2-isopropylmaleate. The polypeptide is 3-isopropylmalate dehydratase large subunit (Brucella melitensis biotype 2 (strain ATCC 23457)).